Reading from the N-terminus, the 518-residue chain is Bifunctional purine biosynthesis protein PurH (518 aa).

Residues 1–144 enclose the MGS-like domain; that stretch reads MNRRAVLSVS…KNQERVSIVV (144 aa).

It belongs to the PurH family.

It catalyses the reaction (6R)-10-formyltetrahydrofolate + 5-amino-1-(5-phospho-beta-D-ribosyl)imidazole-4-carboxamide = 5-formamido-1-(5-phospho-D-ribosyl)imidazole-4-carboxamide + (6S)-5,6,7,8-tetrahydrofolate. The enzyme catalyses IMP + H2O = 5-formamido-1-(5-phospho-D-ribosyl)imidazole-4-carboxamide. The protein operates within purine metabolism; IMP biosynthesis via de novo pathway; 5-formamido-1-(5-phospho-D-ribosyl)imidazole-4-carboxamide from 5-amino-1-(5-phospho-D-ribosyl)imidazole-4-carboxamide (10-formyl THF route): step 1/1. It functions in the pathway purine metabolism; IMP biosynthesis via de novo pathway; IMP from 5-formamido-1-(5-phospho-D-ribosyl)imidazole-4-carboxamide: step 1/1. The protein is Bifunctional purine biosynthesis protein PurH of Desulfitobacterium hafniense (strain DSM 10664 / DCB-2).